We begin with the raw amino-acid sequence, 491 residues long: ATP synthase subunit beta, chloroplastic (491 aa).

Gly-163–Thr-170 serves as a coordination point for ATP.

It belongs to the ATPase alpha/beta chains family. As to quaternary structure, F-type ATPases have 2 components, CF(1) - the catalytic core - and CF(0) - the membrane proton channel. CF(1) has five subunits: alpha(3), beta(3), gamma(1), delta(1), epsilon(1). CF(0) has four main subunits: a(1), b(1), b'(1) and c(9-12).

The protein resides in the plastid. It localises to the chloroplast thylakoid membrane. The enzyme catalyses ATP + H2O + 4 H(+)(in) = ADP + phosphate + 5 H(+)(out). Functionally, produces ATP from ADP in the presence of a proton gradient across the membrane. The catalytic sites are hosted primarily by the beta subunits. In Nephroselmis olivacea (Green alga), this protein is ATP synthase subunit beta, chloroplastic.